A 251-amino-acid chain; its full sequence is Imidazole glycerol phosphate synthase subunit HisF (251 aa).

Residues aspartate 11 and aspartate 130 contribute to the active site.

This sequence belongs to the HisA/HisF family. As to quaternary structure, heterodimer of HisH and HisF.

The protein localises to the cytoplasm. The enzyme catalyses 5-[(5-phospho-1-deoxy-D-ribulos-1-ylimino)methylamino]-1-(5-phospho-beta-D-ribosyl)imidazole-4-carboxamide + L-glutamine = D-erythro-1-(imidazol-4-yl)glycerol 3-phosphate + 5-amino-1-(5-phospho-beta-D-ribosyl)imidazole-4-carboxamide + L-glutamate + H(+). It participates in amino-acid biosynthesis; L-histidine biosynthesis; L-histidine from 5-phospho-alpha-D-ribose 1-diphosphate: step 5/9. Functionally, IGPS catalyzes the conversion of PRFAR and glutamine to IGP, AICAR and glutamate. The HisF subunit catalyzes the cyclization activity that produces IGP and AICAR from PRFAR using the ammonia provided by the HisH subunit. The protein is Imidazole glycerol phosphate synthase subunit HisF of Chloroherpeton thalassium (strain ATCC 35110 / GB-78).